A 527-amino-acid chain; its full sequence is Matrix metalloproteinase-19 (527 aa).

An N-terminal signal peptide occupies residues 1–18 (MDWQQLWLAFLLPMTVSG). Residues 19–98 (RALGPTEKEA…EDPFNQKSLK (80 aa)) constitute a propeptide that is removed on maturation. The Cysteine switch signature appears at 84 to 91 (PRCGLEDP). Cys86 contributes to the Zn(2+) binding site. Asn109 carries N-linked (GlcNAc...) asparagine glycosylation. Zn(2+) is bound at residue His213. Glu214 is an active-site residue. Zn(2+)-binding residues include His217 and His223. Hemopexin repeat units follow at residues 286 to 333 (PNPC…WEGL), 334 to 372 (PGNL…FPMK), 377 to 425 (EPNL…FTGV), and 426 to 471 (PDRP…WMHC). A disulfide bridge links Cys289 with Cys471. Asn464 and Asn479 each carry an N-linked (GlcNAc...) asparagine glycan. The disordered stretch occupies residues 473–500 (SQTPDTNSSTGDVTPSTTDTVLGTTPST). Asp512 is lipidated: GPI-anchor amidated aspartate. Residues 513–527 (SASLSFSANVTLLGA) constitute a propeptide, removed in mature form. The N-linked (GlcNAc...) asparagine glycan is linked to Asn521.

It belongs to the peptidase M10A family. It depends on Zn(2+) as a cofactor. Requires Ca(2+) as cofactor. Activated by autolytic cleavage after Lys-98. In terms of processing, tyrosine phosphorylated by PKDCC/VLK. Highly expressed in the liver. Expressed in the arterial tunica media of large blood vessels.

It localises to the cell membrane. Its subcellular location is the secreted. The protein resides in the extracellular space. It is found in the extracellular matrix. Its function is as follows. Endopeptidase that degrades various components of the extracellular matrix, such as aggrecan and cartilage oligomeric matrix protein (comp), during development, haemostasis and pathological conditions (arthritic disease). May also play a role in neovascularization or angiogenesis. Hydrolyzes collagen type IV, laminin, nidogen, nascin-C isoform, fibronectin, and type I gelatin. The chain is Matrix metalloproteinase-19 (Mmp19) from Mus musculus (Mouse).